We begin with the raw amino-acid sequence, 179 residues long: Large ribosomal subunit protein uL5 (179 aa).

The protein belongs to the universal ribosomal protein uL5 family. In terms of assembly, part of the 50S ribosomal subunit; part of the 5S rRNA/L5/L18/L25 subcomplex. Contacts the 5S rRNA and the P site tRNA. Forms a bridge to the 30S subunit in the 70S ribosome.

Its function is as follows. This is one of the proteins that bind and probably mediate the attachment of the 5S RNA into the large ribosomal subunit, where it forms part of the central protuberance. In the 70S ribosome it contacts protein S13 of the 30S subunit (bridge B1b), connecting the 2 subunits; this bridge is implicated in subunit movement. Contacts the P site tRNA; the 5S rRNA and some of its associated proteins might help stabilize positioning of ribosome-bound tRNAs. The chain is Large ribosomal subunit protein uL5 from Neisseria meningitidis serogroup A / serotype 4A (strain DSM 15465 / Z2491).